We begin with the raw amino-acid sequence, 612 residues long: UvrABC system protein C (612 aa).

A GIY-YIG domain is found at 15–93 (HLPGVYRMYD…IKQHQPKYNV (79 aa)). The UVR domain maps to 203 to 238 (SQVIDYLMQKMEIAASELDFETAARFRDQIQSVRAV).

The protein belongs to the UvrC family. Interacts with UvrB in an incision complex.

Its subcellular location is the cytoplasm. Its function is as follows. The UvrABC repair system catalyzes the recognition and processing of DNA lesions. UvrC both incises the 5' and 3' sides of the lesion. The N-terminal half is responsible for the 3' incision and the C-terminal half is responsible for the 5' incision. This Haemophilus ducreyi (strain 35000HP / ATCC 700724) protein is UvrABC system protein C.